A 2028-amino-acid polypeptide reads, in one-letter code: Phosphatidylinositol 4-kinase alpha 1 (2028 aa).

The tract at residues proline 184–serine 241 is disordered. Over residues glutamine 192–tyrosine 215 the composition is skewed to polar residues. Low complexity predominate over residues serine 231–serine 241. The PIK helical domain maps to threonine 1483 to glutamine 1659. The tract at residues valine 1660–valine 1773 is pleckstrin homology (PH) domain conferring phosphoinositide binding specificity. The PI3K/PI4K catalytic domain maps to valine 1734 to threonine 2012. The G-loop stretch occupies residues leucine 1740–valine 1746. A catalytic loop region spans residues glutamine 1876–asparagine 1884. An activation loop region spans residues histidine 1895–serine 1920.

Belongs to the PI3/PI4-kinase family. Type III PI4K subfamily. As to quaternary structure, interacts in vitro with actin filaments via its PH domain. Present in leaves and inflorescences.

It is found in the membrane. The protein resides in the cytoplasm. Its subcellular location is the perinuclear region. It carries out the reaction a 1,2-diacyl-sn-glycero-3-phospho-(1D-myo-inositol) + ATP = a 1,2-diacyl-sn-glycero-3-phospho-(1D-myo-inositol 4-phosphate) + ADP + H(+). Its activity is regulated as follows. Repressed by PtdIns4P, adenosine and wortmannin, but stimulated by other negatively charged lipids such as PtdIns3P, PtdOH, and phosphatidyl-serine (PtdSer). Acts on phosphatidylinositol (PtdIns) in the first committed step in the production of the second messenger inositol-1,4,5,-trisphosphate. Can bind to phosphatidylinositol 4-monophosphate (PI-4-P or PtdIns4P), phosphatidylinositol 4,5-bisphosphate (PI-4,5-P2 or PtdIns4,5P2), and phosphatidic acid (PtdOH), but not to 3-phosphoinositides. May function upstream of the cold response phosphoinositide-dependent phospholipase C (PI-PLC) pathway. This chain is Phosphatidylinositol 4-kinase alpha 1, found in Arabidopsis thaliana (Mouse-ear cress).